We begin with the raw amino-acid sequence, 344 residues long: N-acetyl-gamma-glutamyl-phosphate reductase (344 aa).

Cys149 is an active-site residue.

It belongs to the NAGSA dehydrogenase family. Type 1 subfamily.

Its subcellular location is the cytoplasm. The enzyme catalyses N-acetyl-L-glutamate 5-semialdehyde + phosphate + NADP(+) = N-acetyl-L-glutamyl 5-phosphate + NADPH + H(+). It participates in amino-acid biosynthesis; L-arginine biosynthesis; N(2)-acetyl-L-ornithine from L-glutamate: step 3/4. Catalyzes the NADPH-dependent reduction of N-acetyl-5-glutamyl phosphate to yield N-acetyl-L-glutamate 5-semialdehyde. In Halorhodospira halophila (strain DSM 244 / SL1) (Ectothiorhodospira halophila (strain DSM 244 / SL1)), this protein is N-acetyl-gamma-glutamyl-phosphate reductase.